The chain runs to 526 residues: Probable feruloyl esterase B-2 (526 aa).

Positions 1-19 (MPSLRRLLPFLAAGSAALA) are cleaved as a signal peptide. 2 disulfides stabilise this stretch: cysteine 28/cysteine 75 and cysteine 63/cysteine 114. 4 N-linked (GlcNAc...) asparagine glycosylation sites follow: asparagine 53, asparagine 85, asparagine 98, and asparagine 138. 3 cysteine pairs are disulfide-bonded: cysteine 187–cysteine 441, cysteine 256–cysteine 273, and cysteine 282–cysteine 291. The active-site Acyl-ester intermediate is serine 188. An N-linked (GlcNAc...) asparagine glycan is attached at asparagine 246. Ca(2+)-binding residues include aspartate 257, aspartate 260, alanine 262, aspartate 264, and isoleucine 266. N-linked (GlcNAc...) asparagine glycosylation is found at asparagine 287 and asparagine 311. Catalysis depends on charge relay system residues aspartate 400 and histidine 440. N-linked (GlcNAc...) asparagine glycans are attached at residues asparagine 490 and asparagine 516. Residues cysteine 503 and cysteine 525 are joined by a disulfide bond.

It belongs to the tannase family.

It localises to the secreted. It carries out the reaction feruloyl-polysaccharide + H2O = ferulate + polysaccharide.. Its function is as follows. Involved in degradation of plant cell walls. Hydrolyzes the feruloyl-arabinose ester bond in arabinoxylans as well as the feruloyl-galactose and feruloyl-arabinose ester bonds in pectin. The protein is Probable feruloyl esterase B-2 (faeB-2) of Aspergillus oryzae (strain ATCC 42149 / RIB 40) (Yellow koji mold).